A 1601-amino-acid polypeptide reads, in one-letter code: PH and SEC7 domain-containing protein (1601 aa).

The tract at residues 1 to 340 (MSEELKVVLR…TGDLILNLSR (340 aa)) is mediates regulation of axon branching and microtubule organization. Residues 6-88 (KVVLRRSEQH…LVTLELKRDP (83 aa)) enclose the PDZ domain. Disordered stretches follow at residues 113–192 (NIYD…SSTK), 211–322 (TSPT…PAKA), 339–440 (SRTP…SLTN), 459–657 (LEED…SSSG), 737–780 (NSSL…SETA), 872–965 (QQQQ…LLSC), and 1040–1126 (QQLK…SDVE). The span at 118–128 (HSSSTNSSPNH) shows a compositional bias: polar residues. The segment covering 166–191 (ASGSTTTTTTATHTHSHSRNSSASST) has biased composition (low complexity). Polar residues predominate over residues 283 to 297 (QSLQHSNSYSGSPVT). Basic and acidic residues predominate over residues 300–311 (RFADREPEREPE). The short motif at 323 to 340 (PRFEAYMMTGDLILNLSR) is the Microtubule elimination domain (MTED); Binds tubulin and blocks microtubule polymerization element. The segment covering 339–348 (SRTPQTSNPL) has biased composition (polar residues). Residues 353-362 (KKIDSLRDSP) are compositionally biased toward basic and acidic residues. Low complexity-rich tracts occupy residues 382 to 399 (SSPT…TSSD), 409 to 424 (QKQQ…QQQQ), and 468 to 487 (QRQQ…YEYY). Over residues 488–505 (QNEDELEEQEEVEEEREE) the composition is skewed to acidic residues. Residues 510–519 (YDITNIETYQ) show a composition bias toward polar residues. A compositionally biased stretch (acidic residues) spans 526 to 557 (DDDDSDRQCLVDDDDDDDAYDDEENDAGDEDY). 2 stretches are compositionally biased toward polar residues: residues 558–567 (STNSLGSGSA) and 617–630 (TSFS…SLST). The span at 640 to 657 (SVPTSPEPSSLVPESSSG) shows a compositional bias: low complexity. Residues 737–747 (NSSLASNNNEG) show a composition bias toward polar residues. 4 stretches are compositionally biased toward low complexity: residues 752–780 (NRSS…SETA), 872–942 (QQQQ…QQQQ), 949–965 (GGQV…LLSC), and 1040–1052 (QQLK…QQQQ). A mediates association to the membrane and rescricts the microtubule-inhibiting activity to the cell cortex region spans residues 894 to 1601 (SSSPQHSAVG…PTNRKEKKKK (708 aa)). Positions 1053-1071 (QRERERDRDRDREQSEHKV) are enriched in basic and acidic residues. The SEC7 domain occupies 1125-1291 (VESLHSYHYS…KSLYQAIKTK (167 aa)). The PH domain maps to 1332 to 1445 (VEYKKGYVMR…WVETINYVCA (114 aa)). Residues 1544–1601 (LELQAQQPSPASHEEEADTFPVGTTACTPPTPQSINQKDQQKEQQQQQPTNRKEKKKK) form a disordered region. Positions 1568–1579 (TACTPPTPQSIN) are enriched in polar residues.

The protein belongs to the PSD family. In terms of assembly, interacts (via MTED motif) with tubulin. In terms of tissue distribution, expressed in the head (at protein level).

The protein localises to the cell projection. The protein resides in the axon. Its subcellular location is the cytoplasm. It is found in the cell membrane. It localises to the cell cortex. Functionally, guanine nucleotide exchange factor for Arf6. Regulates axon growth and branching by inhibiting microtubule polymerisation at the cortex. Together with shot, promotes axonal microtubule bundle integrity. Required for normal ethanol-induced tolerance and preference. Probably by activating Arf6, counteracts ethanol-induced sedation. The polypeptide is PH and SEC7 domain-containing protein (Drosophila melanogaster (Fruit fly)).